The following is a 335-amino-acid chain: Anthranilate phosphoribosyltransferase (335 aa).

5-phospho-alpha-D-ribose 1-diphosphate contacts are provided by residues Gly79, 82–83 (GD), Thr87, 89–92 (NVST), 107–115 (KHGSRSVSS), and Ser119. Gly79 provides a ligand contact to anthranilate. Ser91 contacts Mg(2+). Arg165 contacts anthranilate. Mg(2+)-binding residues include Asp223 and Glu224.

Belongs to the anthranilate phosphoribosyltransferase family. In terms of assembly, homodimer. Mg(2+) is required as a cofactor.

It carries out the reaction N-(5-phospho-beta-D-ribosyl)anthranilate + diphosphate = 5-phospho-alpha-D-ribose 1-diphosphate + anthranilate. It functions in the pathway amino-acid biosynthesis; L-tryptophan biosynthesis; L-tryptophan from chorismate: step 2/5. Catalyzes the transfer of the phosphoribosyl group of 5-phosphorylribose-1-pyrophosphate (PRPP) to anthranilate to yield N-(5'-phosphoribosyl)-anthranilate (PRA). The chain is Anthranilate phosphoribosyltransferase from Helicobacter pylori (strain HPAG1).